A 208-amino-acid chain; its full sequence is MTDSNNQSPNKKTSGSSSAPPAADGRQENRRSRGEKRGGRRDRRGQERDSEWQERVVQIRRVSKTVKGGKKMSFRAIVVVGNEKGQVGVGVGKAGDVIGAVRKGVADGKKHLVRVPLTRNSSIPTLSNGRDGAASVLIRPAAPGTGVIAGGSIRTVLELAGIKNVLAKRLGSKTPLNNARAAMVALSELRTHKATAKERGISLEQIYS.

A compositionally biased stretch (polar residues) spans 1 to 15 (MTDSNNQSPNKKTSG). Residues 1–54 (MTDSNNQSPNKKTSGSSSAPPAADGRQENRRSRGEKRGGRRDRRGQERDSEWQE) form a disordered region. Basic and acidic residues-rich tracts occupy residues 25 to 37 (GRQE…GEKR) and 44 to 54 (RGQERDSEWQE). In terms of domain architecture, S5 DRBM spans 52-115 (WQERVVQIRR…ADGKKHLVRV (64 aa)).

This sequence belongs to the universal ribosomal protein uS5 family. Part of the 30S ribosomal subunit. Contacts proteins S4 and S8.

Its function is as follows. With S4 and S12 plays an important role in translational accuracy. Located at the back of the 30S subunit body where it stabilizes the conformation of the head with respect to the body. This chain is Small ribosomal subunit protein uS5, found in Prochlorococcus marinus (strain NATL2A).